A 152-amino-acid polypeptide reads, in one-letter code: UPF0266 membrane protein YobD (152 aa).

Transmembrane regions (helical) follow at residues 6 to 26 (LVLI…QFIM), 45 to 65 (VDSV…VTSH), and 67 to 87 (AQMT…IFWI).

This sequence belongs to the UPF0266 family.

Its subcellular location is the cell inner membrane. The sequence is that of UPF0266 membrane protein YobD from Salmonella dublin (strain CT_02021853).